Reading from the N-terminus, the 759-residue chain is Phosphoribosylformylglycinamidine synthase subunit PurL (759 aa).

Histidine 34 is an active-site residue. Tyrosine 37 lines the ATP pocket. Glutamate 95 is a binding site for Mg(2+). Substrate is bound by residues serine 96–histidine 99 and arginine 118. Histidine 97 acts as the Proton acceptor in catalysis. Residue aspartate 119 participates in Mg(2+) binding. Glutamine 243 provides a ligand contact to substrate. Aspartate 271 is a Mg(2+) binding site. Residue glutamate 315–glutamine 317 participates in substrate binding. The disordered stretch occupies residues aspartate 388 to valine 422. Residues aspartate 520 and glycine 557 each coordinate ATP. Position 558 (asparagine 558) interacts with Mg(2+). Serine 560 provides a ligand contact to substrate.

It belongs to the FGAMS family. In terms of assembly, monomer. Part of the FGAM synthase complex composed of 1 PurL, 1 PurQ and 2 PurS subunits.

The protein resides in the cytoplasm. It carries out the reaction N(2)-formyl-N(1)-(5-phospho-beta-D-ribosyl)glycinamide + L-glutamine + ATP + H2O = 2-formamido-N(1)-(5-O-phospho-beta-D-ribosyl)acetamidine + L-glutamate + ADP + phosphate + H(+). It functions in the pathway purine metabolism; IMP biosynthesis via de novo pathway; 5-amino-1-(5-phospho-D-ribosyl)imidazole from N(2)-formyl-N(1)-(5-phospho-D-ribosyl)glycinamide: step 1/2. Its function is as follows. Part of the phosphoribosylformylglycinamidine synthase complex involved in the purines biosynthetic pathway. Catalyzes the ATP-dependent conversion of formylglycinamide ribonucleotide (FGAR) and glutamine to yield formylglycinamidine ribonucleotide (FGAM) and glutamate. The FGAM synthase complex is composed of three subunits. PurQ produces an ammonia molecule by converting glutamine to glutamate. PurL transfers the ammonia molecule to FGAR to form FGAM in an ATP-dependent manner. PurS interacts with PurQ and PurL and is thought to assist in the transfer of the ammonia molecule from PurQ to PurL. The chain is Phosphoribosylformylglycinamidine synthase subunit PurL from Halorubrum lacusprofundi (strain ATCC 49239 / DSM 5036 / JCM 8891 / ACAM 34).